An 86-amino-acid chain; its full sequence is Small muscular protein (86 aa).

Residues 20–64 are disordered; sequence MGAFRPGAGQPPRRKECTPEVEEGVPPTSDEEKKPIPGAKKLPGP.

This sequence belongs to the SMPX family.

Plays a role in the regulatory network through which muscle cells coordinate their structural and functional states during growth, adaptation, and repair. The protein is Small muscular protein (SMPX) of Pongo abelii (Sumatran orangutan).